Here is a 212-residue protein sequence, read N- to C-terminus: Stringent starvation protein A homolog (212 aa).

The 79-residue stretch at serine 9–proline 87 folds into the GST N-terminal domain. The GST C-terminal domain occupies tyrosine 92–lysine 212.

This sequence belongs to the GST superfamily. HSP26 family.

Functionally, forms an equimolar complex with the RNA polymerase holoenzyme (RNAP) but not with the core enzyme. In Haemophilus influenzae (strain ATCC 51907 / DSM 11121 / KW20 / Rd), this protein is Stringent starvation protein A homolog (sspA).